The sequence spans 257 residues: GTP cyclohydrolase FolE2 (257 aa).

Belongs to the GTP cyclohydrolase IV family.

The enzyme catalyses GTP + H2O = 7,8-dihydroneopterin 3'-triphosphate + formate + H(+). Its pathway is cofactor biosynthesis; 7,8-dihydroneopterin triphosphate biosynthesis; 7,8-dihydroneopterin triphosphate from GTP: step 1/1. Its function is as follows. Converts GTP to 7,8-dihydroneopterin triphosphate. The chain is GTP cyclohydrolase FolE2 from Dictyoglomus thermophilum (strain ATCC 35947 / DSM 3960 / H-6-12).